Consider the following 306-residue polypeptide: Lipoyl synthase (306 aa).

Cysteine 41, cysteine 46, cysteine 52, cysteine 68, cysteine 72, cysteine 75, and serine 281 together coordinate [4Fe-4S] cluster. The Radical SAM core domain occupies 54–270 (GARRTATFMI…RKVAMDKGFK (217 aa)). The disordered stretch occupies residues 283-306 (HADEQVNEAAKEKHRLGEEKLQQN).

It belongs to the radical SAM superfamily. Lipoyl synthase family. [4Fe-4S] cluster serves as cofactor.

It is found in the cytoplasm. The catalysed reaction is [[Fe-S] cluster scaffold protein carrying a second [4Fe-4S](2+) cluster] + N(6)-octanoyl-L-lysyl-[protein] + 2 oxidized [2Fe-2S]-[ferredoxin] + 2 S-adenosyl-L-methionine + 4 H(+) = [[Fe-S] cluster scaffold protein] + N(6)-[(R)-dihydrolipoyl]-L-lysyl-[protein] + 4 Fe(3+) + 2 hydrogen sulfide + 2 5'-deoxyadenosine + 2 L-methionine + 2 reduced [2Fe-2S]-[ferredoxin]. The protein operates within protein modification; protein lipoylation via endogenous pathway; protein N(6)-(lipoyl)lysine from octanoyl-[acyl-carrier-protein]. Functionally, catalyzes the radical-mediated insertion of two sulfur atoms into the C-6 and C-8 positions of the octanoyl moiety bound to the lipoyl domains of lipoate-dependent enzymes, thereby converting the octanoylated domains into lipoylated derivatives. The sequence is that of Lipoyl synthase from Staphylococcus haemolyticus (strain JCSC1435).